Consider the following 212-residue polypeptide: uncharacterized protein (212 aa).

This is an uncharacterized protein from Mycobacterium tuberculosis (strain ATCC 25618 / H37Rv).